The chain runs to 514 residues: Serine/threonine protein phosphatase PstP (514 aa).

Topologically, residues 1–302 (MARVTLVLRY…RPRWSGRRLA (302 aa)) are cytoplasmic. The 230-residue stretch at 9-238 (RYAARSDRGL…DNVTVVVADV (230 aa)) folds into the PPM-type phosphatase domain. Mn(2+) is bound by residues D38, G39, D118, S160, D191, and D229. A helical membrane pass occupies residues 303–323 (FVVALVTVLMTAGLLIGRAII). Residues 324–514 (RSNYYVADYA…QPGIDCRAAA (191 aa)) lie on the Extracellular side of the membrane. Positions 420 to 514 (LLPPCPAPRA…QPGIDCRAAA (95 aa)) are disordered. Residues 440-480 (TTSETTEPNVTSSPASPSPTTSASAPTGTTPAIPTSASPAA) show a composition bias toward low complexity.

The cofactor is Mn(2+).

Its subcellular location is the cell membrane. It carries out the reaction O-phospho-L-seryl-[protein] + H2O = L-seryl-[protein] + phosphate. The catalysed reaction is O-phospho-L-threonyl-[protein] + H2O = L-threonyl-[protein] + phosphate. Its function is as follows. Plays an important role in regulating cell division and growth by reversible phosphorylation signaling. May play important roles in regulating cellular metabolism and signaling pathways, which could mediate the growth and development of the cell. Plays a role in establishing and maintaining infection. In Mycobacterium tuberculosis (strain CDC 1551 / Oshkosh), this protein is Serine/threonine protein phosphatase PstP (pstP).